Consider the following 169-residue polypeptide: Ferric-chelate reductase (NAD(P)H) (169 aa).

An NADP(+)-binding site is contributed by tyrosine 7. Residues glutamine 27–threonine 31, cysteine 45–threonine 52, arginine 82–serine 84, and lysine 89 each bind FMN. NADP(+) is bound by residues histidine 126 and tyrosine 147 to lysine 154.

This sequence belongs to the non-flavoprotein flavin reductase family. As to quaternary structure, homodimer. The cofactor is FMN. It depends on FAD as a cofactor.

It catalyses the reaction 2 a Fe(II)-siderophore + NAD(+) + H(+) = 2 a Fe(III)-siderophore + NADH. The enzyme catalyses 2 a Fe(II)-siderophore + NADP(+) + H(+) = 2 a Fe(III)-siderophore + NADPH. In terms of biological role, catalyzes the reduction of bound ferric iron (Fe(3+)) in a variety of iron chelators (siderophores) using NAD(P)H as the electron donor, resulting in the release of Fe(2+). Not active with uncomplexed Fe(3+). Also reduces FMN and FAD, but not riboflavin. This is Ferric-chelate reductase (NAD(P)H) from Archaeoglobus fulgidus (strain ATCC 49558 / DSM 4304 / JCM 9628 / NBRC 100126 / VC-16).